The chain runs to 68 residues: Conotoxin Pu5.5 (68 aa).

The signal sequence occupies residues 1–22; that stretch reads MRCVPVFIILLVLIASAPSVDA. A propeptide spanning residues 23–49 is cleaved from the precursor; sequence RPQTKDDALASFRDSIKRHLQTLLDAR.

The protein belongs to the conotoxin T superfamily. Contains 2 disulfide bonds that can be either 'C1-C3, C2-C4' or 'C1-C4, C2-C3', since these disulfide connectivities have been observed for conotoxins with cysteine framework V (for examples, see AC P0DQQ7 and AC P81755). Expressed by the venom duct.

Its subcellular location is the secreted. This chain is Conotoxin Pu5.5, found in Conus pulicarius (Flea-bitten cone).